A 115-amino-acid polypeptide reads, in one-letter code: UPF0212 protein MJ0068 (115 aa).

The protein belongs to the UPF0212 family.

The chain is UPF0212 protein MJ0068 from Methanocaldococcus jannaschii (strain ATCC 43067 / DSM 2661 / JAL-1 / JCM 10045 / NBRC 100440) (Methanococcus jannaschii).